Consider the following 137-residue polypeptide: MKMDTDCRHWIVLASVPVLTVLAFKGEGALALAGLLVMAAVAMYRDRTEKKYSAARAPSPIAGHKTAYVTDPSAFAAGTVPVYPAPSNMGSDRFEGWVGGVLTGVGSSHLDHRKFAERQLVDRREKMVGYGWTKSFF.

Residues 20-42 (TVLAFKGEGALALAGLLVMAAVA) traverse the membrane as a helical segment.

Its subcellular location is the host membrane. This is an uncharacterized protein from Dryophytes versicolor (chameleon treefrog).